The primary structure comprises 695 residues: GRB2-associated-binding protein 1 (695 aa).

Position 2 is an N-acetylserine (Ser-2). Residues 5-116 (EVVCSGWLRK…WVRCICDICG (112 aa)) enclose the PH domain. Residues 204 to 229 (AKPTFSETDCNDNVPSHQTPASSQSK) are disordered. Positions 206-229 (PTFSETDCNDNVPSHQTPASSQSK) are enriched in polar residues. Phosphoserine is present on residues Ser-251, Ser-253, Ser-266, and Ser-304. The disordered stretch occupies residues 306–387 (SYDIPPTPGN…PAGMTPSRSN (82 aa)). Polar residues predominate over residues 314–334 (GNTYQIPRTFPESTLGQSSKL). A Phosphothreonine modification is found at Thr-388. Phosphoserine is present on residues Ser-403 and Ser-455. The interval 453–659 (PNSPPRQHSG…GSSMADERVD (207 aa)) is disordered. Composition is skewed to polar residues over residues 457–466 (PRQHSGSFTE) and 605–617 (FASN…SSPM). Position 628 is a phosphotyrosine (Tyr-628). Phosphothreonine is present on Thr-639. Ser-652 carries the post-translational modification Phosphoserine. Tyr-660 carries the post-translational modification Phosphotyrosine. The interval 671–695 (LKSTREAWTDGRQSTESETPTKNVK) is disordered. Positions 673-685 (STREAWTDGRQST) are enriched in basic and acidic residues. Ser-684 carries the phosphoserine modification. Positions 686 to 695 (ESETPTKNVK) are enriched in polar residues.

Belongs to the GAB family. In terms of assembly, identified in a complex containing FRS2, GRB2, GAB1, PIK3R1 and SOS1. Forms a tripartite complex containing GAB1, METTL13 and SPRY2. Within the complex interacts with METTL13. Interacts with GRB2 and with other SH2-containing proteins. Interacts with phosphorylated LAT2. Interacts with PTPRJ. Interacts (phosphorylated) with PTPN11. Interacts with HCK. In terms of processing, phosphorylated on tyrosine residue(s) by the epidermal growth factor receptor (EGFR) and the insulin receptor (INSR). Tyrosine phosphorylation of GAB1 mediates interaction with several proteins that contain SH2 domains. Phosphorylated on tyrosine residues by HCK upon IL6 signaling. Phosphorylated in response to FGFR1 activation. As to expression, expressed in the inner ear (at protein level). Expression is detected in the cochlear duct, spiral limbus region, efferent and afferent nerves, and in spiral ganglion neurons (at protein level).

Adapter protein that plays a role in intracellular signaling cascades triggered by activated receptor-type kinases. Plays a role in FGFR1 signaling. Probably involved in signaling by the epidermal growth factor receptor (EGFR) and the insulin receptor (INSR). Involved in the MET/HGF-signaling pathway. The polypeptide is GRB2-associated-binding protein 1 (Gab1) (Mus musculus (Mouse)).